Reading from the N-terminus, the 368-residue chain is Probable endopolygalacturonase I (368 aa).

The N-terminal stretch at 1–18 is a signal peptide; the sequence is MHSYQLLGLAAVGSLVSA. Positions 19 to 31 are excised as a propeptide; that stretch reads APAPSRVSEFAKK. A disulfide bond links cysteine 35 and cysteine 50. PbH1 repeat units follow at residues 140 to 161, 162 to 192, and 193 to 214; these read VEDSTFKGINIKNTPVQAISVQ, ATNVHLNDFTIDNSDGDDNGGHNTDGFDISE, and STGVYISGATVKNQDDCIAINS. Aspartate 207 (proton donor) is an active-site residue. Cysteine 209 and cysteine 225 are oxidised to a cystine. Histidine 229 is an active-site residue. 3 PbH1 repeats span residues 244–265, 273–295, and 307–352; these read VKNVTISDSTVSNSANGVRIKT, VSEITYSNIQLSGITDYGIVIEQ, and STGI…DLSG. Asparagine 246 carries N-linked (GlcNAc...) asparagine glycosylation. 2 disulfides stabilise this stretch: cysteine 335–cysteine 340 and cysteine 359–cysteine 368.

It belongs to the glycosyl hydrolase 28 family.

It localises to the secreted. The enzyme catalyses (1,4-alpha-D-galacturonosyl)n+m + H2O = (1,4-alpha-D-galacturonosyl)n + (1,4-alpha-D-galacturonosyl)m.. In terms of biological role, involved in maceration and soft-rotting of plant tissue. Hydrolyzes the 1,4-alpha glycosidic bonds of de-esterified pectate in the smooth region of the plant cell wall. The chain is Probable endopolygalacturonase I (pgaI) from Aspergillus niger (strain ATCC MYA-4892 / CBS 513.88 / FGSC A1513).